Consider the following 640-residue polypeptide: Probable serine/threonine-protein kinase samkA (640 aa).

Residues 21–84 (WNNEKIIKWL…SEFEILKNNY (64 aa)) enclose the SAM domain. Positions 73 to 100 (FKSEFEILKNNYDNNNNNNNNNNNNNNN) form a coiled coil. A disordered region spans residues 84–165 (YDNNNNNNNN…INFNSNSNIT (82 aa)). The region spanning 191–437 (YEYVESISLG…SKDLQKLSWF (247 aa)) is the Protein kinase domain. ATP contacts are provided by residues 197 to 205 (ISLGVFSVV) and lysine 221. The Proton acceptor role is filled by aspartate 312. Residues 448 to 482 (QELTKSTTNTTTTTTTTTTPPPPPSPSSSSPSMNE) are disordered. The span at 453–465 (STTNTTTTTTTTT) shows a compositional bias: low complexity.

Belongs to the protein kinase superfamily. Ser/Thr protein kinase family.

The enzyme catalyses L-seryl-[protein] + ATP = O-phospho-L-seryl-[protein] + ADP + H(+). It catalyses the reaction L-threonyl-[protein] + ATP = O-phospho-L-threonyl-[protein] + ADP + H(+). The polypeptide is Probable serine/threonine-protein kinase samkA (samkA) (Dictyostelium discoideum (Social amoeba)).